A 93-amino-acid chain; its full sequence is Parbolysin P5 (93 aa).

Cystine bridges form between C16–C37, C22–C33, and C47–C60.

It belongs to the worm cytolysin family. Localized within the skin and proboscis and are most readily isolated from body mucus secretions.

The protein resides in the secreted. In terms of biological role, cytolysin that shows hemolytic activity (on bovine erythrocytes, HC(50)=5.75 mg/ml). This hemolytic activity is completely inhibited by small unilamelar vesicles composed of PC/PG, PC/PI and PC/PS in 1:1 molar ratios (with at least 100 mg/ml concentration). This chain is Parbolysin P5, found in Parborlasia corrugatus (Antarctic nemertean worm).